Here is a 902-residue protein sequence, read N- to C-terminus: Protein NrfI (902 aa).

Transmembrane regions (helical) follow at residues 9–29, 75–95, 300–320, 335–355, 602–622, 659–679, 731–751, 772–792, 832–852, and 868–888; these read YITL…ATFI, FLFH…RYLG, VTYL…LDPT, LSLL…YAQS, LVLG…PPLA, DTYE…LLFF, SYGF…LFIL, VSLI…GIWA, YLFS…YFGV, and LPIP…SLIA.

In the C-terminal section; belongs to the CcmF/CycK/Ccl1/NrfE/CcsA family.

The protein resides in the cell membrane. Its function is as follows. May play a role in cytochrome c biogenesis and may be required for maturation of the NrfA protein. This is Protein NrfI (nrfI) from Wolinella succinogenes (strain ATCC 29543 / DSM 1740 / CCUG 13145 / JCM 31913 / LMG 7466 / NCTC 11488 / FDC 602W) (Vibrio succinogenes).